Reading from the N-terminus, the 1114-residue chain is Zinc finger E-box-binding homeobox 1 (1114 aa).

Disordered regions lie at residues 1–105 (MADG…EVGC) and 142–163 (APEE…NGTP). Positions 15–30 (PRRNNVTNYNNVIEAN) are enriched in low complexity. Over residues 149–160 (QGTPEASGQDEN) the composition is skewed to polar residues. C2H2-type zinc fingers lie at residues 170 to 193 (LTCP…KYRH), 200 to 222 (FSCS…MTSH), and 240 to 262 (FKCT…LRIH). A C2H2-type 4; atypical zinc finger spans residues 268 to 292 (YECPNCKKRFSHSGSYSSHISSKKC). Disordered stretches follow at residues 304-326 (SGLK…PARP), 491-529 (NLKK…TNDS), 553-588 (KNPP…GQPP), and 636-716 (QISV…SRNS). The span at 309–326 (SQCSSPSLSASPGSPARP) shows a compositional bias: low complexity. A compositionally biased stretch (basic and acidic residues) spans 504 to 523 (KNEKLPEDLTVKSEKDKNFE). Polar residues-rich tracts occupy residues 573 to 584 (APSETGENNLSP) and 636 to 681 (QISV…QNPA). A DNA-binding region (homeobox; atypical) is located at residues 581–640 (NLSPGQPPLKNLLSLLKAYYALNAQPSAEELSKIADSVNLPLDVVKKWFEKMQAGQISVQ). Low complexity predominate over residues 682–716 (NTSKSQTSSGGSTQNGSRSSTPSPSPLNLSSSRNS). Positions 767–771 (PLNLT) match the CTBP-binding motif motif. 2 stretches are compositionally biased toward polar residues: residues 852-866 (AVQE…ANGS) and 874-890 (SSEG…SDST). The interval 852-898 (AVQETPPKQTQANGSQDERQDTSSEGVSNVEDQNDSDSTPPKKKMRK) is disordered. C2H2-type zinc fingers lie at residues 904 to 926 (YACD…KYEH) and 932 to 954 (HECG…MRLH). A C2H2-type 7; atypical zinc finger spans residues 960-981 (YQCDKCGKRFSHSGSYSQHMNH). The segment at 989 to 1114 (EAEERDSTEQ…QVSEEKTNKA (126 aa)) is disordered. Acidic residues predominate over residues 1031–1047 (EEEEDSEKEEEEEEEKD). The span at 1048–1062 (VEGLQEEKECRKLQD) shows a compositional bias: basic and acidic residues. Positions 1063 to 1078 (VEEEEEVEEEEEEEEG) are enriched in acidic residues. Basic and acidic residues predominate over residues 1079–1089 (KTEGNKNDDVV).

The protein belongs to the delta-EF1/ZFH-1 C2H2-type zinc-finger family. Expression is developmentally regulated with high expression in mesoderm, nervous system and lens.

It is found in the nucleus. Its function is as follows. Acts as a transcriptional repressor. Positively regulates neuronal differentiation. Represses transcription by binding to the E box-containing promoter. Binds to delta 1-crystallin enhancer core and represses lens-specific transcription. It also binds many other non-lens specific DNA sequences. The sequence is that of Zinc finger E-box-binding homeobox 1 (ZEB1) from Gallus gallus (Chicken).